The primary structure comprises 162 residues: NADH-quinone oxidoreductase subunit I (162 aa).

4Fe-4S ferredoxin-type domains are found at residues 53–83 and 93–122; these read LRRY…IEPE and RRYD…EGPN. [4Fe-4S] cluster contacts are provided by C63, C66, C69, C73, C102, C105, C108, and C112.

The protein belongs to the complex I 23 kDa subunit family. NDH-1 is composed of 14 different subunits. Subunits NuoA, H, J, K, L, M, N constitute the membrane sector of the complex. [4Fe-4S] cluster is required as a cofactor.

It localises to the cell inner membrane. It carries out the reaction a quinone + NADH + 5 H(+)(in) = a quinol + NAD(+) + 4 H(+)(out). NDH-1 shuttles electrons from NADH, via FMN and iron-sulfur (Fe-S) centers, to quinones in the respiratory chain. The immediate electron acceptor for the enzyme in this species is believed to be ubiquinone. Couples the redox reaction to proton translocation (for every two electrons transferred, four hydrogen ions are translocated across the cytoplasmic membrane), and thus conserves the redox energy in a proton gradient. The chain is NADH-quinone oxidoreductase subunit I from Paramagnetospirillum magneticum (strain ATCC 700264 / AMB-1) (Magnetospirillum magneticum).